A 1538-amino-acid chain; its full sequence is Phenolphthiocerol/phthiocerol polyketide synthase subunit B (1538 aa).

Residues 33–455 (AEPVAVVGIG…GTNAHVIIEQ (423 aa)) form the Ketosynthase family 3 (KS3) domain. Catalysis depends on for beta-ketoacyl synthase activity residues cysteine 205, histidine 340, and histidine 377. The tract at residues 553–882 (DGSPGPGTVF…TNLYTADIAH (330 aa)) is acyltransferase. The active-site For malonyltransferase activity is the serine 649. An NADP(+)-binding site is contributed by 1153–1196 (SQLVIGATGNIGPHLIRQLARMGAKTIVAMARKPGALDELTQCL). The segment at 1153–1328 (SQLVIGATGN…TVVDWGLWKS (176 aa)) is beta-ketoacyl reductase. Residues 1423 to 1498 (DMLFDHVGAL…SLTDYLATVL (76 aa)) form the Carrier domain. Serine 1458 is modified (O-(pantetheine 4'-phosphoryl)serine).

NADP(+) is required as a cofactor. The cofactor is pantetheine 4'-phosphate.

The catalysed reaction is icosanoyl-[(phenol)carboxyphthiodiolenone synthase] + 2 (S)-methylmalonyl-CoA + 3 malonyl-CoA + 5 NADPH + 10 H(+) = C32-carboxyphthiodiolenone-[(phenol)carboxyphthiodiolenone synthase] + 5 CO2 + 5 NADP(+) + 5 CoA + 2 H2O. The enzyme catalyses docosanoyl-[(phenol)carboxyphthiodiolenone synthase] + 2 (S)-methylmalonyl-CoA + 3 malonyl-CoA + 5 NADPH + 10 H(+) = C34-carboxyphthiodiolenone-[(phenol)carboxyphthiodiolenone synthase] + 5 CO2 + 5 NADP(+) + 5 CoA + 2 H2O. It carries out the reaction 17-(4-hydroxyphenyl)heptadecanoyl-[(phenol)carboxyphthiodiolenone synthase] + 2 (S)-methylmalonyl-CoA + 3 malonyl-CoA + 5 NADPH + 10 H(+) = C35-(phenol)carboxyphthiodiolenone-[(phenol)carboxyphthiodiolenone synthase] + 5 CO2 + 5 NADP(+) + 5 CoA + 2 H2O. It catalyses the reaction 19-(4-hydroxyphenyl)nonadecanoyl-[(phenol)carboxyphthiodiolenone synthase] + 2 (S)-methylmalonyl-CoA + 3 malonyl-CoA + 5 NADPH + 10 H(+) = C37-(phenol)carboxyphthiodiolenone-[(phenol)carboxyphthiodiolenone synthase] + 5 CO2 + 5 NADP(+) + 5 CoA + 2 H2O. Its pathway is lipid metabolism; fatty acid biosynthesis. Part of the PpsABCDE complex involved in the biosynthesis of the lipid core common to phthiocerols and phenolphthiocerols by successive additions of malonyl-CoA or methylmalonyl-CoA extender units. PpsA can accept as substrate the activated forms of either icosanoyl (C20), docosanoyl (C22) or lignoceroyl (C24) groups from FadD26, or a (4-hydroxyphenyl)-C17 or (4-hydroxyphenyl)-C19 fatty acyl from FadD29. PpsA initiates the biosynthesis and extends its substrate using a malonyl-CoA extender unit. The PpsB and PpsC proteins add the second and third malonyl-CoA extender units. PpsD adds an (R)-methylmalonyl unit and PpsE adds a second (R)-methylmalonyl unit. The incorporation of the methylmalonyl units results in formation of two branched methyl groups in the elongated product. This Mycobacterium tuberculosis (strain CDC 1551 / Oshkosh) protein is Phenolphthiocerol/phthiocerol polyketide synthase subunit B (ppsB).